Here is a 182-residue protein sequence, read N- to C-terminus: Isopentenyl-diphosphate Delta-isomerase (182 aa).

Mn(2+) is bound by residues H25 and H32. A Nudix hydrolase domain is found at L30–M164. C67 is an active-site residue. A Mg(2+)-binding site is contributed by C67. Position 69 (H69) interacts with Mn(2+). E87 contributes to the Mg(2+) binding site. Mn(2+)-binding residues include E114 and E116. E116 is an active-site residue.

The protein belongs to the IPP isomerase type 1 family. In terms of assembly, homodimer. It depends on Mg(2+) as a cofactor. Mn(2+) is required as a cofactor.

It localises to the cytoplasm. It catalyses the reaction isopentenyl diphosphate = dimethylallyl diphosphate. It participates in isoprenoid biosynthesis; dimethylallyl diphosphate biosynthesis; dimethylallyl diphosphate from isopentenyl diphosphate: step 1/1. Functionally, catalyzes the 1,3-allylic rearrangement of the homoallylic substrate isopentenyl (IPP) to its highly electrophilic allylic isomer, dimethylallyl diphosphate (DMAPP). This chain is Isopentenyl-diphosphate Delta-isomerase, found in Escherichia coli O6:H1 (strain CFT073 / ATCC 700928 / UPEC).